The following is a 377-amino-acid chain: Cyclin-I (377 aa).

A disordered region spans residues 356-377 (TDLSRQEGHASPCPPLQPVSVM). Pro residues predominate over residues 367-377 (PCPPLQPVSVM).

This sequence belongs to the cyclin family.

The sequence is that of Cyclin-I (Ccni) from Mus musculus (Mouse).